Consider the following 242-residue polypeptide: NADH-quinone oxidoreductase subunit C (242 aa).

Positions 67–101 are insert; that stretch reads VVNSVGLGHKEQGAKPITNRRTTSDNVGESKSIDY.

The protein belongs to the complex I 30 kDa subunit family. As to quaternary structure, NDH-1 is composed of 14 different subunits. Subunits NuoB, C, D, E, F, and G constitute the peripheral sector of the complex.

Its subcellular location is the cell inner membrane. The catalysed reaction is a quinone + NADH + 5 H(+)(in) = a quinol + NAD(+) + 4 H(+)(out). Its function is as follows. NDH-1 shuttles electrons from NADH, via FMN and iron-sulfur (Fe-S) centers, to quinones in the respiratory chain. The immediate electron acceptor for the enzyme in this species is believed to be ubiquinone. Couples the redox reaction to proton translocation (for every two electrons transferred, four hydrogen ions are translocated across the cytoplasmic membrane), and thus conserves the redox energy in a proton gradient. The polypeptide is NADH-quinone oxidoreductase subunit C (Rickettsia conorii (strain ATCC VR-613 / Malish 7)).